The sequence spans 373 residues: MKIISEGETKLMVPEESTLSKKDTVFYNPMMETNRDISVSVVQSFLDNFNRDEFLMCDPLGGSGARGIRYANELKFNGDLKVSIGDINPSAVKMIKENLKLNELENVEVFHEDANVLLSKNFKIFNVVDLDPFGSPVPYLDSGIRASLTKGGLLCMTATDTAVLCGAYRKTCIRKYNAIPLKGDKELAVRLMIGYAVKMASKYDIGLKPIFSHVTDHYARTFMVTERGAGKADSAIENLGYIRQDSEQKSFKSFEEGYEKGYTGPFYLGEISDNDIVQNSLETAKNRNYSKRAVDILELISKESKIEQVGCFDIHELCSFIKKLVPPVNDIMKNLKENGFKVSRVHYNPYGLKTDAELSDLVVLISEYHSKKY.

The region spanning 2 to 365 (KIISEGETKL…AELSDLVVLI (364 aa)) is the Trm1 methyltransferase domain. 5 residues coordinate S-adenosyl-L-methionine: Arg-35, Arg-66, Asp-86, Asp-113, and Ala-114.

The protein belongs to the class I-like SAM-binding methyltransferase superfamily. Trm1 family.

The enzyme catalyses guanosine(26) in tRNA + 2 S-adenosyl-L-methionine = N(2)-dimethylguanosine(26) in tRNA + 2 S-adenosyl-L-homocysteine + 2 H(+). Its function is as follows. Dimethylates a single guanine residue at position 26 of a number of tRNAs using S-adenosyl-L-methionine as donor of the methyl groups. The polypeptide is tRNA (guanine(26)-N(2))-dimethyltransferase (Methanococcus maripaludis (strain C6 / ATCC BAA-1332)).